The primary structure comprises 247 residues: Protein ABHD14A (247 aa).

A helical; Signal-anchor for type II membrane protein transmembrane segment spans residues A11–P31. N-linked (GlcNAc...) asparagine glycosylation occurs at N43. Active-site charge relay system residues include S147, D198, and H225.

Belongs to the AB hydrolase superfamily. ABHD14 family. Widely expressed. Higher expression is detected in brain, kidney, heart, testis, ovary and uterus.

The protein localises to the cytoplasm. It localises to the membrane. Possible role in granule neuron development. The polypeptide is Protein ABHD14A (Mus musculus (Mouse)).